The chain runs to 289 residues: Early E1A protein (289 aa).

Residues 41–49 are interaction with RB1 in competition with E2F1; the sequence is PTLHELYDL. The interaction with UBE2I stretch occupies residues 76-140; that stretch reads EGIDLLTFPP…PSDDEDEEGE (65 aa). A disordered region spans residues 82-107; it reads TFPPAPGSPEPPHLSRQPEQPEQRAL. Residues 84-93 are compositionally biased toward pro residues; the sequence is PPAPGSPEPP. Ser89 is modified (phosphoserine; by host). A PXLXP motif, interaction with host ZMYND11 motif is present at residues 113-117; that stretch reads PNLVP. The LXCXE motif, interaction with host RB1 and TMEM173/STING motif lies at 122–126; it reads LTCHE. Residues 154-174 fold into a zinc finger; it reads CRSCHYHRRNTGDPDIMCSLC. The tract at residues 186 to 240 is disordered; it reads PVSEPEPEPEPEPEPARPTRRPKMAPAILRRPTSPVSRECNSSTDSCDSGPSNTP. Residues Ser219 and Ser231 each carry the phosphoserine; by host modification. Polar residues predominate over residues 219 to 237; sequence SPVSRECNSSTDSCDSGPS. The short motif at 258–289 is the Bipartite nuclear localization signal element; that stretch reads RVGGRRQAVECIEDLLNEPGQPLDLSCKRPRP. A PXDLS motif, CTBP-binding motif is present at residues 279 to 283; sequence PLDLS.

This sequence belongs to the adenoviridae E1A protein family. Interacts with host UBE2I; this interaction interferes with polySUMOylation. Interacts with host RB1; this interaction induces the aberrant dissociation of RB1-E2F1 complex thereby disrupting the activity of RB1 and activating E2F1-regulated genes. Interacts with host ATF7; the interaction enhances ATF7-mediated viral transactivation activity which requires the zinc binding domains of both proteins. Isoform early E1A 32 kDa protein and isoform early E1A 26 kDa protein interact (via N-terminus) with CUL1 and E3 ubiquitin ligase RBX1; these interactions inhibit RBX1-CUL1-dependent elongation reaction of ubiquitin chains and attenuate ubiquitination of SCF(FBXW7) target proteins. Interacts (via PXLXP motif) with host ZMYND11/BS69 (via MYND-type zinc finger); this interaction inhibits E1A mediated transactivation. Interacts with host EP300; this interaction stimulates the acetylation of RB1 by recruiting EP300 and RB1 into a multimeric-protein complex. Interacts with host CTBP1 and CTBP2; this interaction seems to potentiate viral replication. Interacts with host DCAF7 (ref.16). Interacts with host DYRK1A. Interacts with host KPNA4; this interaction allows E1A import into the host nucleus. Interacts with host EP400; this interaction stabilizes MYC. Interacts with host TBP protein; this interaction probably disrupts the TBP-TATA complex. Interacts (via LXCXE motif) with host TMEM173/STING; this interaction impairs the ability of TMEM173/STING to sense cytosolic DNA and promote the production of type I interferon (IFN-alpha and IFN-beta). Interacts (via C-terminus) with host ZBED1/hDREF (via C-terminus); the interaction is direct.

It localises to the host nucleus. Plays a role in viral genome replication by driving entry of quiescent cells into the cell cycle. Stimulation of progression from G1 to S phase allows the virus to efficiently use the cellular DNA replicating machinery to achieve viral genome replication. E1A protein has both transforming and trans-activating activities. Induces the disassembly of the E2F1 transcription factor from RB1 by direct competition for the same binding site on RB1, with subsequent transcriptional activation of E2F1-regulated S-phase genes and of the E2 region of the adenoviral genome. Release of E2F1 leads to the ARF-mediated inhibition of MDM2 and causes TP53/p53 to accumulate because it is not targeted for degradation by MDM2-mediated ubiquitination anymore. This increase in TP53, in turn, would arrest the cell proliferation and direct its death but this effect is counteracted by the viral protein E1B-55K. Inactivation of the ability of RB1 to arrest the cell cycle is critical for cellular transformation, uncontrolled cellular growth and proliferation induced by viral infection. Interaction with RBX1 and CUL1 inhibits ubiquitination of the proteins targeted by SCF(FBXW7) ubiquitin ligase complex, and may be linked to unregulated host cell proliferation. The tumorigenesis-restraining activity of E1A may be related to the disruption of the host CtBP-CtIP complex through the CtBP binding motif. Interaction with host TMEM173/STING impairs the ability of TMEM173/STING to sense cytosolic DNA and promote the production of type I interferon (IFN-alpha and IFN-beta). Promotes the sumoylation of host ZBED1/hDREF with SUMO1. The chain is Early E1A protein from Homo sapiens (Human).